Reading from the N-terminus, the 44-residue chain is Homeobox protein DLX-1 (44 aa).

The segment at 19–44 (RALSAGSPPVPPGWNRIPPLGRAQEE) is disordered.

The protein belongs to the distal-less homeobox family. Interacts with SMAD4 (via homeobox DNA-binding domain). Interacts (via homeobox DNA-binding domain) with POU4F2; this interaction suppresses DLX1-mediated transcriptional activity in postnatal retina and enhances retinal ganglion cell (RGC) differentiation.

The protein localises to the nucleus. Plays a role as a transcriptional activator or repressor. Inhibits several cytokine signaling pathways, such as TGFB1, activin-A/INHBA and BMP4 by interfering with the transcriptional stimulatory activity of transcription factors, such as MSX2, FAST2, SMAD2 and SMAD3 during hematopoietic cell differentiation. Plays a role in terminal differentiation of interneurons, such as amacrine and bipolar cells in the developing retina. Likely to play a regulatory role in the development of the ventral forebrain. May play a role in craniofacial patterning and morphogenesis and may be involved in the early development of diencephalic subdivisions. The protein is Homeobox protein DLX-1 (Dlx1) of Rattus norvegicus (Rat).